Reading from the N-terminus, the 254-residue chain is Triosephosphate isomerase 2 (254 aa).

9–11 (NMK) is a substrate binding site. His96 acts as the Electrophile in catalysis. Glu168 functions as the Proton acceptor in the catalytic mechanism. 2 residues coordinate substrate: Gly174 and Ser212.

It belongs to the triosephosphate isomerase family. In terms of assembly, homodimer.

It is found in the cytoplasm. It carries out the reaction D-glyceraldehyde 3-phosphate = dihydroxyacetone phosphate. It functions in the pathway polyol metabolism; glycerol degradation. Its function is as follows. Involved in the glycerol metabolism. Catalyzes stereospecifically the conversion of dihydroxyacetone phosphate (DHAP) to D-glyceraldehyde-3-phosphate (G3P). This Listeria innocua serovar 6a (strain ATCC BAA-680 / CLIP 11262) protein is Triosephosphate isomerase 2.